The chain runs to 1025 residues: Glycine dehydrogenase (decarboxylating), mitochondrial (1025 aa).

Residues 1–35 (MQLCARAWGLRLGRGAGGGHRLARGTGLSWAQRSR) constitute a mitochondrion transit peptide. The disordered stretch occupies residues 16–51 (AGGGHRLARGTGLSWAQRSRDSSGGGGGGGGGDRGA). Gly residues predominate over residues 38–50 (SGGGGGGGGGDRG). An N6-acetyllysine mark is found at lysine 452, lysine 519, lysine 653, and lysine 669. Lysine 759 carries the post-translational modification N6-(pyridoxal phosphate)lysine.

It belongs to the GcvP family. As to quaternary structure, interacts with GCSH. Homodimer. The glycine cleavage system is composed of four proteins: P (GLDC), T (GCST), L (DLD) and H (GCSH). Pyridoxal 5'-phosphate serves as cofactor.

The protein resides in the mitochondrion. It catalyses the reaction N(6)-[(R)-lipoyl]-L-lysyl-[glycine-cleavage complex H protein] + glycine + H(+) = N(6)-[(R)-S(8)-aminomethyldihydrolipoyl]-L-lysyl-[glycine-cleavage complex H protein] + CO2. With respect to regulation, stimulated by lipoic acid. Inhibited in presence of methylamine. In terms of biological role, the glycine cleavage system catalyzes the degradation of glycine. The P protein (GLDC) binds the alpha-amino group of glycine through its pyridoxal phosphate cofactor; CO(2) is released and the remaining methylamine moiety is then transferred to the lipoamide cofactor of the H protein (GCSH). The sequence is that of Glycine dehydrogenase (decarboxylating), mitochondrial from Mus musculus (Mouse).